Here is a 233-residue protein sequence, read N- to C-terminus: Small ribosomal subunit protein uS2 (233 aa).

This sequence belongs to the universal ribosomal protein uS2 family.

The sequence is that of Small ribosomal subunit protein uS2 from Clostridium botulinum (strain Alaska E43 / Type E3).